A 536-amino-acid polypeptide reads, in one-letter code: 2-isopropylmalate synthase (536 aa).

Residues 8-269 (IIIFDTTLRD…YYNPFLGRPV (262 aa)) enclose the Pyruvate carboxyltransferase domain. The Mn(2+) site is built by Asp-17, His-208, His-210, and Asn-244. Residues 408 to 536 (RLELVQVSCG…KEKAAVTSAS (129 aa)) form a regulatory domain region.

It belongs to the alpha-IPM synthase/homocitrate synthase family. LeuA type 1 subfamily. As to quaternary structure, homodimer. Requires Mn(2+) as cofactor.

The protein resides in the cytoplasm. The catalysed reaction is 3-methyl-2-oxobutanoate + acetyl-CoA + H2O = (2S)-2-isopropylmalate + CoA + H(+). It functions in the pathway amino-acid biosynthesis; L-leucine biosynthesis; L-leucine from 3-methyl-2-oxobutanoate: step 1/4. Functionally, catalyzes the condensation of the acetyl group of acetyl-CoA with 3-methyl-2-oxobutanoate (2-ketoisovalerate) to form 3-carboxy-3-hydroxy-4-methylpentanoate (2-isopropylmalate). This Gloeothece citriformis (strain PCC 7424) (Cyanothece sp. (strain PCC 7424)) protein is 2-isopropylmalate synthase.